The primary structure comprises 153 residues: Large ribosomal subunit protein uL15 (153 aa).

The tract at residues 15 to 42 is disordered; the sequence is ARRIVGRGSSSGRGTTSGRGTKGQQARA. A compositionally biased stretch (gly residues) spans 23–35; sequence SSSGRGTTSGRGT.

Belongs to the universal ribosomal protein uL15 family. In terms of assembly, part of the 50S ribosomal subunit.

Its function is as follows. Binds to the 23S rRNA. This chain is Large ribosomal subunit protein uL15, found in Treponema pallidum (strain Nichols).